Consider the following 292-residue polypeptide: uncharacterized protein (292 aa).

It belongs to the glycosyltransferase 2 family. WaaE/KdtX subfamily.

This is an uncharacterized protein from Rickettsia prowazekii (strain Madrid E).